The chain runs to 272 residues: Tryptophan synthase alpha chain (272 aa).

Catalysis depends on proton acceptor residues Glu49 and Asp60.

It belongs to the TrpA family. As to quaternary structure, tetramer of two alpha and two beta chains.

The enzyme catalyses (1S,2R)-1-C-(indol-3-yl)glycerol 3-phosphate + L-serine = D-glyceraldehyde 3-phosphate + L-tryptophan + H2O. It participates in amino-acid biosynthesis; L-tryptophan biosynthesis; L-tryptophan from chorismate: step 5/5. Its function is as follows. The alpha subunit is responsible for the aldol cleavage of indoleglycerol phosphate to indole and glyceraldehyde 3-phosphate. In Polaromonas naphthalenivorans (strain CJ2), this protein is Tryptophan synthase alpha chain.